The chain runs to 161 residues: Crossover junction endodeoxyribonuclease RuvC (161 aa).

Residues D8, E67, and D139 contribute to the active site. Residues D8, E67, and D139 each contribute to the Mg(2+) site.

Belongs to the RuvC family. Homodimer which binds Holliday junction (HJ) DNA. The HJ becomes 2-fold symmetrical on binding to RuvC with unstacked arms; it has a different conformation from HJ DNA in complex with RuvA. In the full resolvosome a probable DNA-RuvA(4)-RuvB(12)-RuvC(2) complex forms which resolves the HJ. It depends on Mg(2+) as a cofactor.

Its subcellular location is the cytoplasm. It catalyses the reaction Endonucleolytic cleavage at a junction such as a reciprocal single-stranded crossover between two homologous DNA duplexes (Holliday junction).. The RuvA-RuvB-RuvC complex processes Holliday junction (HJ) DNA during genetic recombination and DNA repair. Endonuclease that resolves HJ intermediates. Cleaves cruciform DNA by making single-stranded nicks across the HJ at symmetrical positions within the homologous arms, yielding a 5'-phosphate and a 3'-hydroxyl group; requires a central core of homology in the junction. The consensus cleavage sequence is 5'-(A/T)TT(C/G)-3'. Cleavage occurs on the 3'-side of the TT dinucleotide at the point of strand exchange. HJ branch migration catalyzed by RuvA-RuvB allows RuvC to scan DNA until it finds its consensus sequence, where it cleaves and resolves the cruciform DNA. This chain is Crossover junction endodeoxyribonuclease RuvC, found in Wigglesworthia glossinidia brevipalpis.